The following is a 109-amino-acid chain: Spermidine export protein MdtI (109 aa).

Helical transmembrane passes span 6–26, 36–56, 64–84, and 88–108; these read FYPIAFLILAVMLEIVANILL, WLGILSLLSVLGAFSALAQAV, AYALWGGFGIAATVAAGWILF, and LNYKGWIGLILLLAGMVMIKL.

This sequence belongs to the drug/metabolite transporter (DMT) superfamily. Small multidrug resistance (SMR) (TC 2.A.7.1) family. MdtI subfamily. In terms of assembly, forms a complex with MdtJ.

It is found in the cell inner membrane. In terms of biological role, catalyzes the excretion of spermidine. In Yersinia pseudotuberculosis serotype O:1b (strain IP 31758), this protein is Spermidine export protein MdtI.